Consider the following 220-residue polypeptide: Fructose-6-phosphate aldolase 1 (220 aa).

Lys-85 functions as the Schiff-base intermediate with substrate in the catalytic mechanism.

Belongs to the transaldolase family. Type 3A subfamily. Homodecamer.

It is found in the cytoplasm. It carries out the reaction beta-D-fructose 6-phosphate = dihydroxyacetone + D-glyceraldehyde 3-phosphate. Functionally, catalyzes the reversible formation of fructose 6-phosphate from dihydroxyacetone and D-glyceraldehyde 3-phosphate via an aldolization reaction. The chain is Fructose-6-phosphate aldolase 1 (fsaA) from Escherichia coli O6:H1 (strain CFT073 / ATCC 700928 / UPEC).